The chain runs to 57 residues: uncharacterized protein (57 aa).

This is an uncharacterized protein from Dictyostelium discoideum (Social amoeba).